Here is a 311-residue protein sequence, read N- to C-terminus: Ribonuclease Z (311 aa).

Histidine 61, histidine 63, aspartate 65, histidine 66, histidine 137, aspartate 207, and histidine 263 together coordinate Zn(2+). Residue aspartate 65 is the Proton acceptor of the active site.

The protein belongs to the RNase Z family. As to quaternary structure, homodimer. Zn(2+) is required as a cofactor.

It catalyses the reaction Endonucleolytic cleavage of RNA, removing extra 3' nucleotides from tRNA precursor, generating 3' termini of tRNAs. A 3'-hydroxy group is left at the tRNA terminus and a 5'-phosphoryl group is left at the trailer molecule.. Functionally, zinc phosphodiesterase, which displays some tRNA 3'-processing endonuclease activity. Probably involved in tRNA maturation, by removing a 3'-trailer from precursor tRNA. The chain is Ribonuclease Z from Thermococcus onnurineus (strain NA1).